A 175-amino-acid chain; its full sequence is uncharacterized protein (175 aa).

The segment at 71–166 adopts a DNL-type zinc-finger fold; the sequence is QPKPTYNVSF…KPPQFKIRPA (96 aa). Residues cysteine 82, cysteine 85, cysteine 107, and cysteine 110 each contribute to the Zn(2+) site.

This is an uncharacterized protein from Schizosaccharomyces pombe (strain 972 / ATCC 24843) (Fission yeast).